The following is a 54-amino-acid chain: MKVNCKGYPTKFCFGKPLPHCASDGKTYPNRCRFCNAFVKSHGLITLRYYGKCK.

The Kazal-like domain maps to 1–54 (MKVNCKGYPTKFCFGKPLPHCASDGKTYPNRCRFCNAFVKSHGLITLRYYGKCK). 3 cysteine pairs are disulfide-bonded: C5–C35, C13–C32, and C21–C53.

As to quaternary structure, may form disulfide-linked dimers or trimers (in vitro). Expressed by the venom gland.

Its subcellular location is the secreted. Its function is as follows. Partially inhibits trypsin in vitro at slightly acidic pH and concentrations in excess of 0.3 mM. Has no protease inhibitory activity at neutral or basic pH. Has no antibacterial activity. Shows no toxicity in vertebrates apart from transient paw edema in mouse. The chain is Kazal-type inhibitor-like protein from Bothriechis schlegelii (Eyelash palm pitviper).